Consider the following 367-residue polypeptide: Voltage-gated potassium channel subunit beta-2 (367 aa).

3 positions are modified to phosphoserine: S9, S14, and S20. R28 is modified (asymmetric dimethylarginine; alternate). R28 carries the omega-N-methylarginine; alternate modification. S31 bears the Phosphoserine mark. Residues T56, W57, Q63, and D85 each contribute to the NADP(+) site. Residue Y90 is the Proton donor/acceptor of the active site. A Phosphoserine modification is found at S112. The residue at position 124 (K124) is an N6-acetyllysine. NADP(+) contacts are provided by N158, S188, R189, Q214, W243, S244, P245, L246, A247, C248, K254, Y262, R264, G323, S325, Q329, E332, and N333.

It belongs to the shaker potassium channel beta subunit family. Homotetramer. Interaction with tetrameric potassium channel alpha subunits gives rise to a heterooctamer. Identified in potassium channel complexes containing KCNA1, KCNA2, KCNA4, KCNA5, KCNA6, KCNAB1, KCNAB2 and KCND3. Interacts (in unphosphorylated form) with MAPRE1. Forms a ternary complex with SQSTM1 and PRKCZ. In terms of processing, phosphorylated by PRKCZ; may be regulated by incorporation in a complex composed of PRKCZ and SQSTM1. Detected in the juxtaparanodal region of nodes of Ranvier in myelinated nerve fibers in the spinal cord (at protein level).

Its subcellular location is the cytoplasm. The protein resides in the membrane. The protein localises to the cell membrane. It is found in the cell projection. It localises to the axon. Its subcellular location is the synapse. The protein resides in the synaptosome. The protein localises to the cytoskeleton. The catalysed reaction is hydroxyacetone + NADP(+) = methylglyoxal + NADPH + H(+). It catalyses the reaction (E)-4-oxonon-2-en-1-ol + NADP(+) = (E)-4-oxonon-2-enal + NADPH + H(+). Functionally, regulatory subunit of the voltage-gated potassium (Kv) Shaker channels composed of pore-forming and potassium-conducting alpha subunits and of regulatory beta subunits. The beta-2/KCNAB2 cytoplasmic subunit promotes potassium channel closure via a mechanism that does not involve physical obstruction of the channel pore. Promotes the inactivation of Kv1.4/KCNA4 and Kv1.5/KCNA5 alpha subunit-containing channels. Displays nicotinamide adenine dinucleotide phosphate (NADPH)-dependent aldoketoreductase activity by catalyzing the NADPH-dependent reduction of a wide range of aldehyde and ketone substrates. Substrate specificity includes methylglyoxal, 9,10-phenanthrenequinone, prostaglandin J2, 4-nitrobenzaldehyde, 4-nitroacetophenone and 4-oxo-trans-2-nonenal (in vitro, no physiological substrate identified yet). The binding of oxidized and reduced nucleotide alters Kv channel gating and may contribute to dynamic fine tuning of cell excitability. Contributes to the regulation of nerve signaling, and prevents neuronal hyperexcitability. This is Voltage-gated potassium channel subunit beta-2 (KCNAB2) from Bos taurus (Bovine).